We begin with the raw amino-acid sequence, 274 residues long: Oxidized low-density lipoprotein receptor 1 (274 aa).

Residues 1 to 16 are compositionally biased toward basic and acidic residues; sequence MAVDDLKVKPMKDQPD. The segment at 1 to 25 is disordered; the sequence is MAVDDLKVKPMKDQPDQKSNGKKPK. Residues 1-31 lie on the Cytoplasmic side of the membrane; that stretch reads MAVDDLKVKPMKDQPDQKSNGKKPKGLRFLS. The helical; Signal-anchor for type II membrane protein transmembrane segment at 32-54 threads the bilayer; it reads SPWWCPAAVALGVLCLGSLMTII. S-palmitoyl cysteine attachment occurs at residues cysteine 36 and cysteine 46. A neck region spans residues 55–150; the sequence is MLGMQLLQVS…SGPCPEDWLW (96 aa). Residues 55-274 are Extracellular-facing; it reads MLGMQLLQVS…QKKANLLRSE (220 aa). N-linked (GlcNAc...) asparagine glycosylation is found at asparagine 73 and asparagine 139. Positions 84–139 form a coiled coil; that stretch reads QVLAQQQAEAASQESQRELKEMIETLAKRLDEKSKKQMELNHQYLNLQEALKRMDN. 3 disulfide bridges follow: cysteine 144–cysteine 155, cysteine 172–cysteine 264, and cysteine 243–cysteine 256. A C-type lectin domain is found at 151–265; it reads HGKNCYLFSS…CILVAYSICQ (115 aa).

Homodimer; disulfide-linked. May form a hexamer composed of 3 homodimers. Interacts with HSP70. In terms of processing, N-glycosylated.

It is found in the cell membrane. The protein resides in the membrane raft. Its subcellular location is the secreted. In terms of biological role, receptor that mediates the recognition, internalization and degradation of oxidatively modified low density lipoprotein (oxLDL) by vascular endothelial cells. OxLDL is a marker of atherosclerosis that induces vascular endothelial cell activation and dysfunction, resulting in pro-inflammatory responses, pro-oxidative conditions and apoptosis. Its association with oxLDL induces the activation of NF-kappa-B through an increased production of intracellular reactive oxygen and a variety of pro-atherogenic cellular responses including a reduction of nitric oxide (NO) release, monocyte adhesion and apoptosis. In addition to binding oxLDL, it acts as a receptor for the HSP70 protein involved in antigen cross-presentation to naive T-cells in dendritic cells, thereby participating in cell-mediated antigen cross-presentation. Also involved in inflammatory process, by acting as a leukocyte-adhesion molecule at the vascular interface in endotoxin-induced inflammation. Also acts as a receptor for advanced glycation end (AGE) products, activated platelets, monocytes, apoptotic cells and both Gram-negative and Gram-positive bacteria. The sequence is that of Oxidized low-density lipoprotein receptor 1 (OLR1) from Oryctolagus cuniculus (Rabbit).